A 109-amino-acid chain; its full sequence is MSLITSGVLLTQSQDTLTFSVTTCQGLRLTKFASSTLKDARLKIVSQKEVNGKLRLTLGAGRYLYSIRISLETGTMQCLTTVLPSTVSVDTLPGTYLESTLQRQNQKSS.

This sequence belongs to the orthobunyavirus NS-S protein family.

Inhibits host transcriptional machinery, by producing modifications to the phosphorylation state of the C-terminal domain (CTD) of RNA polymerase II. Inhibits phosphorylation at serine 2 in the heptapeptide repeat (YSPTSPS) of the CTD of RNA polymerase II, suggesting that the elongation step of transcription and/or 3'-end processing is prevented. Inhibition of host transcription machinery leads to shut off of host cell protein synthesis and inhibition of the host innate immune response. NSs also seems to be involved in the nuclear relocalization of host PABP1. This is Non-structural protein NS-S (N) from Culex.